The chain runs to 120 residues: Large ribosomal subunit protein uL18 (120 aa).

Basic and acidic residues predominate over residues 1 to 10 (MKLNRVESTR). The segment at 1–26 (MKLNRVESTRSRHRRVRRKVGGTGDR) is disordered. Residues 11-20 (SRHRRVRRKV) show a composition bias toward basic residues.

The protein belongs to the universal ribosomal protein uL18 family. In terms of assembly, part of the 50S ribosomal subunit; part of the 5S rRNA/L5/L18/L25 subcomplex. Contacts the 5S and 23S rRNAs.

Its function is as follows. This is one of the proteins that bind and probably mediate the attachment of the 5S RNA into the large ribosomal subunit, where it forms part of the central protuberance. The sequence is that of Large ribosomal subunit protein uL18 from Cyanothece sp. (strain PCC 7425 / ATCC 29141).